The chain runs to 371 residues: Anhydro-N-acetylmuramic acid kinase (371 aa).

12–20 (GTVLDGNID) provides a ligand contact to ATP.

Belongs to the anhydro-N-acetylmuramic acid kinase family.

It carries out the reaction 1,6-anhydro-N-acetyl-beta-muramate + ATP + H2O = N-acetyl-D-muramate 6-phosphate + ADP + H(+). It functions in the pathway amino-sugar metabolism; 1,6-anhydro-N-acetylmuramate degradation. The protein operates within cell wall biogenesis; peptidoglycan recycling. Catalyzes the specific phosphorylation of 1,6-anhydro-N-acetylmuramic acid (anhMurNAc) with the simultaneous cleavage of the 1,6-anhydro ring, generating MurNAc-6-P. Is required for the utilization of anhMurNAc either imported from the medium or derived from its own cell wall murein, and thus plays a role in cell wall recycling. The sequence is that of Anhydro-N-acetylmuramic acid kinase from Rhizobium rhizogenes (strain K84 / ATCC BAA-868) (Agrobacterium radiobacter).